Here is a 153-residue protein sequence, read N- to C-terminus: Nucleoside diphosphate kinase (153 aa).

Positions 12, 60, 88, 94, 105, and 115 each coordinate ATP. The active-site Pros-phosphohistidine intermediate is His118.

It belongs to the NDK family. The cofactor is Mg(2+).

The protein localises to the cytoplasm. It carries out the reaction a 2'-deoxyribonucleoside 5'-diphosphate + ATP = a 2'-deoxyribonucleoside 5'-triphosphate + ADP. The enzyme catalyses a ribonucleoside 5'-diphosphate + ATP = a ribonucleoside 5'-triphosphate + ADP. Functionally, major role in the synthesis of nucleoside triphosphates other than ATP. The ATP gamma phosphate is transferred to the NDP beta phosphate via a ping-pong mechanism, using a phosphorylated active-site intermediate. The chain is Nucleoside diphosphate kinase from Natronomonas pharaonis (strain ATCC 35678 / DSM 2160 / CIP 103997 / JCM 8858 / NBRC 14720 / NCIMB 2260 / Gabara) (Halobacterium pharaonis).